The following is a 330-amino-acid chain: Electron transfer flavoprotein subunit alpha (330 aa).

270 to 298 (LYIACGISGAIQHLAGMSNSGTIVAINKN) is a binding site for FAD.

This sequence belongs to the ETF alpha-subunit/FixB family. Heterodimer of an alpha and a beta subunit. FAD serves as cofactor.

The electron transfer flavoprotein serves as a specific electron acceptor for other dehydrogenases. It transfers the electrons to the main respiratory chain via ETF-ubiquinone oxidoreductase (ETF dehydrogenase). This chain is Electron transfer flavoprotein subunit alpha (etfA), found in Thermoanaerobacterium thermosaccharolyticum (strain ATCC 7956 / DSM 571 / NCIMB 9385 / NCA 3814 / NCTC 13789 / WDCM 00135 / 2032) (Clostridium thermosaccharolyticum).